A 148-amino-acid polypeptide reads, in one-letter code: Large ribosomal subunit protein uL15 (148 aa).

The segment at 1-51 (MNLSNLKPAEGSTKTRKRIGRGAGSGLGGTSTRGHKGAKSRSGYSKKVGFE) is disordered. A compositionally biased stretch (gly residues) spans 21–31 (RGAGSGLGGTS).

Belongs to the universal ribosomal protein uL15 family. Part of the 50S ribosomal subunit.

In terms of biological role, binds to the 23S rRNA. This is Large ribosomal subunit protein uL15 from Bacteroides thetaiotaomicron (strain ATCC 29148 / DSM 2079 / JCM 5827 / CCUG 10774 / NCTC 10582 / VPI-5482 / E50).